Here is a 202-residue protein sequence, read N- to C-terminus: CASP-like protein 2B1 (202 aa).

Topologically, residues 1 to 29 (MSYLGVGVSPGNVPVYHGSNLKVIDKRVR) are cytoplasmic. Residues 30 to 50 (LAELVLRCLICGLGVLAAVLV) form a helical membrane-spanning segment. At 51 to 72 (GTDTQVKEIFSIQKKARFTDMK) the chain is on the extracellular side. A helical transmembrane segment spans residues 73–93 (ALVFLVIANGIAAAYSLLQGV). Residues 94-109 (RCVVGMVRGSALFSKP) are Cytoplasmic-facing. The chain crosses the membrane as a helical span at residues 110-130 (LAWAIFSGDQMMAYLTVAAVA). Residues 131–164 (AAAQSAVFAKLGQPELQWMKICNMYGKFCNQVGE) lie on the Extracellular side of the membrane. The helical transmembrane segment at 165–185 (GIASALLVSVSMVVLSCISAF) threads the bilayer. At 186–202 (SLFRLYGANKGKDCTRW) the chain is on the cytoplasmic side.

The protein belongs to the Casparian strip membrane proteins (CASP) family. As to quaternary structure, homodimer and heterodimers.

It is found in the cell membrane. The chain is CASP-like protein 2B1 from Ricinus communis (Castor bean).